Here is a 457-residue protein sequence, read N- to C-terminus: UDP-N-acetylmuramate--L-alanyl-gamma-D-glutamyl-meso-2,6-diaminoheptandioate ligase (457 aa).

110–116 provides a ligand contact to ATP; it reads GTHGKTT.

It belongs to the MurCDEF family. Mpl subfamily. Mg(2+) is required as a cofactor.

It localises to the secreted. It catalyses the reaction UDP-N-acetyl-alpha-D-muramate + L-alanyl-gamma-D-glutamyl-meso-2,6-diaminopimelate + ATP = UDP-N-acetyl-alpha-D-muramoyl-L-alanyl-gamma-D-glutamyl-meso-2,6-diaminopimelate + ADP + phosphate + H(+). The protein operates within cell wall biogenesis; peptidoglycan recycling. Functionally, reutilizes the intact tripeptide L-alanyl-gamma-D-glutamyl-meso-diaminopimelate by linking it to UDP-N-acetylmuramate. The enzyme can also use the tetrapeptide L-alanyl-gamma-D-glutamyl-meso-2,6-diaminoheptanedioyl-D-alanine or the pentapeptide L-alanyl-gamma-D-glutamyl-meso-2,6-diaminoheptandioyl-D-alanyl-D-alanine in vivo and in vitro. The sequence is that of UDP-N-acetylmuramate--L-alanyl-gamma-D-glutamyl-meso-2,6-diaminoheptandioate ligase from Escherichia coli (strain K12).